Here is a 97-residue protein sequence, read N- to C-terminus: Large ribosomal subunit protein uL23 (97 aa).

This sequence belongs to the universal ribosomal protein uL23 family. Part of the 50S ribosomal subunit. Contacts protein L29, and trigger factor when it is bound to the ribosome.

One of the early assembly proteins it binds 23S rRNA. One of the proteins that surrounds the polypeptide exit tunnel on the outside of the ribosome. Forms the main docking site for trigger factor binding to the ribosome. In Rhizobium rhizogenes (strain K84 / ATCC BAA-868) (Agrobacterium radiobacter), this protein is Large ribosomal subunit protein uL23.